Reading from the N-terminus, the 317-residue chain is Sulfate adenylyltransferase subunit 2 (317 aa).

Disordered regions lie at residues 1-21 (MPDS…APLD) and 298-317 (RAID…EGYF).

This sequence belongs to the PAPS reductase family. CysD subfamily. Heterodimer composed of CysD, the smaller subunit, and CysN.

The enzyme catalyses sulfate + ATP + H(+) = adenosine 5'-phosphosulfate + diphosphate. It participates in sulfur metabolism; hydrogen sulfide biosynthesis; sulfite from sulfate: step 1/3. Its function is as follows. With CysN forms the ATP sulfurylase (ATPS) that catalyzes the adenylation of sulfate producing adenosine 5'-phosphosulfate (APS) and diphosphate, the first enzymatic step in sulfur assimilation pathway. APS synthesis involves the formation of a high-energy phosphoric-sulfuric acid anhydride bond driven by GTP hydrolysis by CysN coupled to ATP hydrolysis by CysD. This is Sulfate adenylyltransferase subunit 2 from Rhizobium etli (strain ATCC 51251 / DSM 11541 / JCM 21823 / NBRC 15573 / CFN 42).